The primary structure comprises 688 residues: MWCFVFFSLLASFSAEPTMYGEILSPNYPQAYPNEVVKTWDIEVPEGFGIHLYFTHLDMELSENCAYDSVQIISGGIEEERLCGQRTSKSPNSPTVEEFQFPYNRLQVVFTSDFSNEERFTGFAAYYSAVDVNECTDFTDVPCSHFCNNFIGGYFCSCPPEYFLHDDMRTCGVNCSGDVFTALIGEIASPNYPNPYPENSRCEYQIRLQEGFRLVLTIRREDFDVEPADSEGNCHDSLTFAAKNQQFGPYCGNGFPGPLTIKTQSNTLDIVFQTDLTGQNKGWKLRYHGDPIPCPKEISANSIWEPEKAKYVFKDVVKITCVDGFEVVEGNVGSTSFYSTCQSNGQWSNSRLECQPVDCGVPEPIENGKVEDPEDTVFGSVIHYTCEEPYYYMEQEEGGEYHCAANGSWVNDQLGVELPKCIPVCGVPTEPFKVQQRIFGGYSTKIQSFPWQVYFESPRGGGALIDEYWVLTAAHVVEGNSDPVMYVGSTLLKIERLRNAQRLITERVIIHPSWKQEDDLNTRTNFDNDIALVQLKDPVKMGPTVAPICLPETSSDYNPSEGDLGLISGWGRTENRTNVIQLRGAKLPITSLEKCQQVKVENPKARSNDYVFTDNMICAGEKGVDSCEGDSGGAFALPVPNVKDPKFYVAGLVSWGKKCGTYGIYTKVKNYVDWILKTMQENSGPKKD.

Residues 1-15 form the signal peptide; that stretch reads MWCFVFFSLLASFSA. One can recognise a CUB 1 domain in the interval 16–130; it reads EPTMYGEILS…TGFAAYYSAV (115 aa). Positions 60, 68, 113, 131, 132, and 134 each coordinate Ca(2+). Cys-65 and Cys-83 are joined by a disulfide. In terms of domain architecture, EGF-like; calcium-binding spans 131-172; it reads DVNECTDFTDVPCSHFCNNFIGGYFCSCPPEYFLHDDMRTCG. Intrachain disulfides connect Cys-135-Cys-147, Cys-143-Cys-156, and Cys-158-Cys-171. Residues Asn-149, Phe-150, and Gly-153 each coordinate Ca(2+). At Asn-149 the chain carries (3R)-3-hydroxyasparagine. N-linked (GlcNAc...) asparagine glycosylation occurs at Asn-174. A disulfide bridge links Cys-175 with Cys-202. Positions 175 to 290 constitute a CUB 2 domain; it reads CSGDVFTALI…KGWKLRYHGD (116 aa). Positions 226, 236, 275, 278, and 279 each coordinate Ca(2+). Cys-234 and Cys-251 are disulfide-bonded. Sushi domains follow at residues 292–356 and 357–423; these read IPCP…ECQP and VDCG…KCIP. Disulfide bonds link Cys-294–Cys-341, Cys-321–Cys-354, Cys-359–Cys-403, Cys-386–Cys-421, Cys-425–Cys-549, Cys-595–Cys-618, and Cys-627–Cys-659. Asn-406 is a glycosylation site (N-linked (GlcNAc...) asparagine). The region spanning 438-680 is the Peptidase S1 domain; it reads IFGGYSTKIQ…YVDWILKTMQ (243 aa). Active-site charge relay system residues include His-475 and Asp-529. The active-site Charge relay system is Ser-631.

It belongs to the peptidase S1 family. As to quaternary structure, core component of the complement C1 complex, a calcium-dependent complex composed of 1 molecule of the C1Q subcomplex, 2 molecules of C1R and 2 molecules of C1S. The C1Q subcomplex is composed 18 subunits: 3 chains of C1QA, C1QB, and C1QC trimerize to form 6 collagen-like triple helices connected to six globular ligand-recognition modules. In terms of processing, cleaved and activated by C1R to generate Complement C1s subcomponent heavy and light chains. Post-translationally, the iron and 2-oxoglutarate dependent 3-hydroxylation of aspartate and asparagine is (R) stereospecific within EGF domains.

It localises to the secreted. It is found in the cell surface. It carries out the reaction Cleavage of Arg-|-Ala bond in complement component C4 to form C4a and C4b, and Lys(or Arg)-|-Lys bond in complement component C2 to form C2a and C2b: the 'classical' pathway C3 convertase.. With respect to regulation, cleaved and activated by C1R. Immunoglobulin-binding promotes autoactivation of C1R, which results in the cleavage of the Arg-Ile bond in the catalytic domain. Inhibited by C1 inhibitor (SERPING1). In terms of biological role, component of the complement C1 complex, a multiprotein complex that initiates the classical pathway of the complement system, a cascade of proteins that leads to phagocytosis and breakdown of pathogens and signaling that strengthens the adaptive immune system. C1S is activated following association of the C1 complex with immunoglobulins (IgG or IgM) complexed with antigens to form antigen-antibody complexes on the surface of pathogens. C1S is cleaved and activated by C1R to generate C1s subcomponent heavy and light chains. C1s subcomponent light chain then cleaves and activates C2 and C4, the next components of the classical complement pathway. Functionally, serine protease component of the complement C1 complex, which catalyzes cleavage and activation of C2 and C4, the next components of the classical complement pathway. Also cleaves IGFBP5 and thereby inhibits the trophic effects of IGF1. This chain is Complement C1s subcomponent, found in Rattus norvegicus (Rat).